The chain runs to 134 residues: MKPSERRKARRLAVQAIYSWQLSQNKVADVEHEFLTEQNTDGVDVAYFRELLTGVASKTSQIDELLKPHLDRKFEEVSPVEKAIVRLATYELTFRKDVPFKVAINEGIELAKAFGAEDSHKFVNGLLDKLVKHK.

It belongs to the NusB family.

Its function is as follows. Involved in transcription antitermination. Required for transcription of ribosomal RNA (rRNA) genes. Binds specifically to the boxA antiterminator sequence of the ribosomal RNA (rrn) operons. The sequence is that of Transcription antitermination protein NusB from Shewanella frigidimarina (strain NCIMB 400).